Here is a 74-residue protein sequence, read N- to C-terminus: uncharacterized protein (74 aa).

Residues 52 to 72 (ITFGFTVLGLGIGMIFGDAGL) form a helical membrane-spanning segment.

The protein localises to the membrane. This is an uncharacterized protein from Methanocaldococcus jannaschii (strain ATCC 43067 / DSM 2661 / JAL-1 / JCM 10045 / NBRC 100440) (Methanococcus jannaschii).